The chain runs to 400 residues: Small ribosomal subunit protein bS1 (400 aa).

S1 motif domains are found at residues 17-87 (GDVV…VTYL), 107-173 (EEVV…LSRR), 194-262 (GDVV…LSLK), and 279-348 (GDVV…LSIK). Positions 351 to 366 (EERPAQEEGQKEEKRA) are enriched in basic and acidic residues. The segment at 351 to 400 (EERPAQEEGQKEEKRAARPRRPRRQEKRDFELPETQTGFSMADLFGDIEL) is disordered.

This sequence belongs to the bacterial ribosomal protein bS1 family. Post-translationally, phosphorylated.

Its function is as follows. Binds mRNA; thus facilitating recognition of the initiation point. It is needed to translate mRNA with a short Shine-Dalgarno (SD) purine-rich sequence. The protein is Small ribosomal subunit protein bS1 (rpsA) of Streptococcus pneumoniae (strain ATCC BAA-255 / R6).